Consider the following 29-residue polypeptide: U-homostoxin-Hdu1a (29 aa).

O-linked (GlcNAc...) threonine glycosylation is present at threonine 1. Cystine bridges form between cysteine 7–cysteine 19 and cysteine 10–cysteine 25.

Belongs to the sea anemone BBH family.

It is found in the secreted. The protein resides in the nematocyst. This is U-homostoxin-Hdu1a from Homostichanthus duerdeni (Sea anemone).